Consider the following 807-residue polypeptide: uncharacterized protein (807 aa).

The N-terminal stretch at M1 to G18 is a signal peptide. Residues L19–E704 lie on the Extracellular side of the membrane. Polar residues predominate over residues T133–G142. A disordered region spans residues T133–D171. 2 N-linked (GlcNAc...) asparagine; by host glycosylation sites follow: N277 and N660. Residues V705 to I725 form a helical membrane-spanning segment. The Cytoplasmic segment spans residues S726–N807.

The protein localises to the host membrane. This is an uncharacterized protein from Magallana gigas (Pacific oyster).